The primary structure comprises 94 residues: Alpha-conotoxin Ms20.3 (94 aa).

Positions M1–G24 are cleaved as a signal peptide. Residues Q25–R45 constitute a propeptide that is removed on maturation. E49 is modified (4-carboxyglutamate). Residue P55 is modified to 4-hydroxyproline. Disulfide bonds link C63-C72, C68-C80, C73-C90, and C78-C92.

This sequence belongs to the conotoxin D superfamily. Hetero-, homo- or pseudo-homodimer (identical sequence, different post-translational modifications). Homodimer of [carboxyGlu-49, hydroxyPro-55]Ms20.3, and heterodimer of [carboxyGlu-49, hydroxyPro-55]Ms20.3 and [carboxy'Glu-50', hydroxy'Pro-56']Ms20.5 may exist. As to expression, expressed by the venom duct.

The protein localises to the secreted. Its function is as follows. Alpha-D-conopeptides act on postsynaptic membranes, they bind to the nicotinic acetylcholine receptors (nAChR) and thus inhibit them. Through its two C-terminal domains, this homodimeric protein would bind to two nAChR allosteric sites, located outside the nAChR C-loop of the principal binding face and at the adjacent binding interface in a clockwise direction. This toxin specifically blocks mammalian neuronal nAChR of the alpha-7/CHRNA7 (IC(50)=0.12 nM), alpha-3-beta-2/CHRNA3-CHRNB2 (IC(50)=1.08 nM), and alpha-4-beta-2/CHRNA4-CHRNB2 (IC(50)=4.5 nM) subtypes. Has no effect on alpha-3-beta-4/CHRNA3-CHRNB4, alpha-4-beta-4/CHRNA4-CHRNB4 and alpha-1-beta-1-epsilon-delta/CHRNA1-CHRNB1-CHRNE-CHRND subtypes of nAChRs. The sequence is that of Alpha-conotoxin Ms20.3 from Conus mustelinus (Weasel cone).